The following is a 600-amino-acid chain: Probable tripeptidyl-peptidase SED4 (600 aa).

An N-terminal signal peptide occupies residues 1-22 (MVSFTLRAIGACLIGLPALITA). The propeptide at 23 to 202 (APTSHVSNDF…SVFTSDLEIT (180 aa)) is removed in mature form. Asparagine 210 and asparagine 281 each carry an N-linked (GlcNAc...) asparagine glycan. Residues 212 to 600 (TITPDCIREL…FEKLSKLVLI (389 aa)) enclose the Peptidase S53 domain. Active-site charge relay system residues include glutamate 288 and aspartate 292. 2 N-linked (GlcNAc...) asparagine glycosylation sites follow: asparagine 323 and asparagine 404. Catalysis depends on serine 504, which acts as the Charge relay system. 2 residues coordinate Ca(2+): aspartate 546 and isoleucine 547. N-linked (GlcNAc...) asparagine glycosylation is present at asparagine 575. 2 residues coordinate Ca(2+): glycine 579 and aspartate 581.

It depends on Ca(2+) as a cofactor.

The protein resides in the secreted. It localises to the extracellular space. The enzyme catalyses Release of an N-terminal tripeptide from a polypeptide.. Functionally, secreted tripeptidyl-peptidase which degrades proteins at acidic pHs and is involved in virulence. The protein is Probable tripeptidyl-peptidase SED4 (SED4) of Arthroderma benhamiae (strain ATCC MYA-4681 / CBS 112371) (Trichophyton mentagrophytes).